A 304-amino-acid chain; its full sequence is Non-specific ribonucleoside hydrolase RihC (304 aa).

His233 is an active-site residue.

This sequence belongs to the IUNH family. RihC subfamily.

Hydrolyzes both purine and pyrimidine ribonucleosides with a broad-substrate specificity. The sequence is that of Non-specific ribonucleoside hydrolase RihC from Escherichia coli (strain SE11).